Reading from the N-terminus, the 217-residue chain is ATP phosphoribosyltransferase (217 aa).

Belongs to the ATP phosphoribosyltransferase family. Short subfamily. Heteromultimer composed of HisG and HisZ subunits.

The protein resides in the cytoplasm. It carries out the reaction 1-(5-phospho-beta-D-ribosyl)-ATP + diphosphate = 5-phospho-alpha-D-ribose 1-diphosphate + ATP. Its pathway is amino-acid biosynthesis; L-histidine biosynthesis; L-histidine from 5-phospho-alpha-D-ribose 1-diphosphate: step 1/9. Functionally, catalyzes the condensation of ATP and 5-phosphoribose 1-diphosphate to form N'-(5'-phosphoribosyl)-ATP (PR-ATP). Has a crucial role in the pathway because the rate of histidine biosynthesis seems to be controlled primarily by regulation of HisG enzymatic activity. The chain is ATP phosphoribosyltransferase from Parasynechococcus marenigrum (strain WH8102).